The chain runs to 305 residues: Aspartate carbamoyltransferase catalytic subunit (305 aa).

2 residues coordinate carbamoyl phosphate: arginine 56 and threonine 57. Residue lysine 85 participates in L-aspartate binding. Carbamoyl phosphate is bound by residues arginine 106, histidine 134, and glutamine 137. 2 residues coordinate L-aspartate: arginine 167 and arginine 227. The carbamoyl phosphate site is built by leucine 266 and proline 267.

It belongs to the aspartate/ornithine carbamoyltransferase superfamily. ATCase family. In terms of assembly, heterooligomer of catalytic and regulatory chains.

It catalyses the reaction carbamoyl phosphate + L-aspartate = N-carbamoyl-L-aspartate + phosphate + H(+). Its pathway is pyrimidine metabolism; UMP biosynthesis via de novo pathway; (S)-dihydroorotate from bicarbonate: step 2/3. Functionally, catalyzes the condensation of carbamoyl phosphate and aspartate to form carbamoyl aspartate and inorganic phosphate, the committed step in the de novo pyrimidine nucleotide biosynthesis pathway. In Thermoplasma acidophilum (strain ATCC 25905 / DSM 1728 / JCM 9062 / NBRC 15155 / AMRC-C165), this protein is Aspartate carbamoyltransferase catalytic subunit.